A 460-amino-acid chain; its full sequence is Cysteine--tRNA ligase (460 aa).

Cys28 is a Zn(2+) binding site. Residues 30–40 carry the 'HIGH' region motif; it reads MTVYDYCHLGH. 3 residues coordinate Zn(2+): Cys209, His234, and Glu238. A 'KMSKS' region motif is present at residues 266 to 270; it reads KMSKS. Lys269 lines the ATP pocket.

This sequence belongs to the class-I aminoacyl-tRNA synthetase family. In terms of assembly, monomer. Zn(2+) is required as a cofactor.

Its subcellular location is the cytoplasm. It carries out the reaction tRNA(Cys) + L-cysteine + ATP = L-cysteinyl-tRNA(Cys) + AMP + diphosphate. The sequence is that of Cysteine--tRNA ligase from Pseudomonas entomophila (strain L48).